The primary structure comprises 372 residues: Isoliquiritigenin 2'-O-methyltransferase (372 aa).

5 residues coordinate S-adenosyl-L-methionine: G217, D240, D260, M261, and K274. Catalysis depends on H278, which acts as the Proton acceptor.

Belongs to the class I-like SAM-binding methyltransferase superfamily. Cation-independent O-methyltransferase family. COMT subfamily. In terms of assembly, monomer. Homodimer. As to expression, roots (at protein level). Expressed mainly in roots, and to a lesser extent in root nodules. In the roots, expression is not detected in the root tip or the cells immediately behind the tip, but is detected in tissues starting 1.5-2.0 mm distal to the root tip. Detected in the epidermal and cortical cells of 2 day old roots, with lower levels in vascular tissue.

The enzyme catalyses isoliquiritigenin + S-adenosyl-L-methionine = 2'-O-methylisoliquiritigenin + S-adenosyl-L-homocysteine + H(+). It catalyses the reaction licodione + S-adenosyl-L-methionine = 2'-O-methyllicodione + S-adenosyl-L-homocysteine + H(+). With respect to regulation, inhibited by 1 mM Co(2+), Cu(2+), Zn(2+) or Fe(2+). Non-competitively inhibited by S-adenosyl-L-homocysteine. Competitively inhibited by 2'-O-methylisoliquiritigenin. Its function is as follows. Methylates the 2'-hydroxyl of isoliquiritigenin and licodione. Does not methylate narigenin chalcone, caffeic acid or daidzein. Involved in the root nodulation initiation by promoting the biosynthesis of nod-inducing molecules. The protein is Isoliquiritigenin 2'-O-methyltransferase of Medicago sativa (Alfalfa).